Consider the following 201-residue polypeptide: Small ribosomal subunit protein uS4c (201 aa).

An S4 RNA-binding domain is found at Met-89 to Ile-152.

It belongs to the universal ribosomal protein uS4 family. As to quaternary structure, part of the 30S ribosomal subunit. Contacts protein S5. The interaction surface between S4 and S5 is involved in control of translational fidelity.

The protein localises to the plastid. It is found in the chloroplast. Functionally, one of the primary rRNA binding proteins, it binds directly to 16S rRNA where it nucleates assembly of the body of the 30S subunit. Its function is as follows. With S5 and S12 plays an important role in translational accuracy. This Crucihimalaya wallichii (Rock-cress) protein is Small ribosomal subunit protein uS4c (rps4).